We begin with the raw amino-acid sequence, 495 residues long: ESX-2 secretion system ATPase EccB2 (495 aa).

Residues 43–63 (LALSMVLVAIAAGWMMLLNVL) form a helical membrane-spanning segment.

This sequence belongs to the EccB family. Part of the ESX-2 / type VII secretion system (T7SS), which is composed of cytosolic and membrane components.

The protein resides in the cell membrane. Functionally, an ATPase. The sequence is that of ESX-2 secretion system ATPase EccB2 (eccB2) from Mycobacterium tuberculosis (strain CDC 1551 / Oshkosh).